The sequence spans 133 residues: MTSTPQPSRPSSLDAEIAARLKRSADGLVPAIAQQYDTGEVLMLGWMDDEALHRTLTTGRCTYWSRSRGEYWVKGDTSGHVQYVKSVALDCDADTVLVKVDQVGAACHTGAHTCFDADVLLKDGDSGVPAADQ.

D90 lines the Mg(2+) pocket. Residue C91 coordinates Zn(2+). Mg(2+) is bound by residues D92 and D94. Zn(2+) contacts are provided by C107 and C114.

This sequence belongs to the PRA-CH family. As to quaternary structure, homodimer. Requires Mg(2+) as cofactor. It depends on Zn(2+) as a cofactor.

Its subcellular location is the cytoplasm. It catalyses the reaction 1-(5-phospho-beta-D-ribosyl)-5'-AMP + H2O = 1-(5-phospho-beta-D-ribosyl)-5-[(5-phospho-beta-D-ribosylamino)methylideneamino]imidazole-4-carboxamide. It participates in amino-acid biosynthesis; L-histidine biosynthesis; L-histidine from 5-phospho-alpha-D-ribose 1-diphosphate: step 3/9. Its function is as follows. Catalyzes the hydrolysis of the adenine ring of phosphoribosyl-AMP. In Streptomyces avermitilis (strain ATCC 31267 / DSM 46492 / JCM 5070 / NBRC 14893 / NCIMB 12804 / NRRL 8165 / MA-4680), this protein is Phosphoribosyl-AMP cyclohydrolase.